We begin with the raw amino-acid sequence, 215 residues long: LexA repressor (215 aa).

The segment at residues 28–48 (RAEIAAELGFSSPNAAEEHLR) is a DNA-binding region (H-T-H motif). Active-site for autocatalytic cleavage activity residues include S133 and K170.

This sequence belongs to the peptidase S24 family. In terms of assembly, homodimer.

The enzyme catalyses Hydrolysis of Ala-|-Gly bond in repressor LexA.. Represses a number of genes involved in the response to DNA damage (SOS response), including recA and lexA. In the presence of single-stranded DNA, RecA interacts with LexA causing an autocatalytic cleavage which disrupts the DNA-binding part of LexA, leading to derepression of the SOS regulon and eventually DNA repair. In Burkholderia cenocepacia (strain HI2424), this protein is LexA repressor.